The sequence spans 310 residues: tRNA pseudouridine synthase B (310 aa).

Aspartate 49 (nucleophile) is an active-site residue.

It belongs to the pseudouridine synthase TruB family. Type 1 subfamily.

The catalysed reaction is uridine(55) in tRNA = pseudouridine(55) in tRNA. Responsible for synthesis of pseudouridine from uracil-55 in the psi GC loop of transfer RNAs. The chain is tRNA pseudouridine synthase B from Idiomarina loihiensis (strain ATCC BAA-735 / DSM 15497 / L2-TR).